Reading from the N-terminus, the 840-residue chain is Heat shock 70 kDa protein 4 (840 aa).

Lysine 53 is subject to N6-acetyllysine. Position 76 is a phosphoserine (serine 76). Phosphotyrosine is present on residues tyrosine 89 and tyrosine 336. Phosphoserine is present on residues serine 393 and serine 415. Lysine 430 carries the post-translational modification N6-acetyllysine. Residues 500-575 are disordered; the sequence is VHKSEENEEP…QAKKAKVKTS (76 aa). Basic and acidic residues predominate over residues 514–533; sequence QNAKEEEKMQVDQEEPHVEE. Residue threonine 538 is modified to Phosphothreonine. 2 positions are modified to phosphoserine: serine 546 and serine 647. Position 660 is a phosphotyrosine (tyrosine 660). Position 679 is an N6-acetyllysine (lysine 679). At serine 756 the chain carries Phosphoserine. Lysine 773 carries the N6-methyllysine modification. Residues 779–840 are disordered; that stretch reads CSPIISKPKP…DKKLPEMDID (62 aa). 2 stretches are compositionally biased toward basic and acidic residues: residues 788-799 and 829-840; these read PKVEPPKEEQKN and DSDKKLPEMDID.

The protein belongs to the heat shock protein 70 family. As to quaternary structure, interacts with TJP1/ZO-1.

It is found in the cytoplasm. This is Heat shock 70 kDa protein 4 (HSPA4) from Homo sapiens (Human).